Reading from the N-terminus, the 543-residue chain is CTP synthase (543 aa).

The interval 1 to 265 (MTNYIFVTGG…DQLVVDRFGL (265 aa)) is amidoligase domain. CTP is bound at residue S13. S13 provides a ligand contact to UTP. Residues 14–19 (SLGKGI) and D71 each bind ATP. Residues D71 and E139 each contribute to the Mg(2+) site. Residues 146–148 (DIE), 186–191 (KTKPTQ), and K222 each bind CTP. Residues 186–191 (KTKPTQ) and K222 contribute to the UTP site. 238–240 (KDV) serves as a coordination point for ATP. The region spanning 290–541 (NIGMIGKYVE…VAAAGKYQKE (252 aa)) is the Glutamine amidotransferase type-1 domain. G351 is an L-glutamine binding site. Residue C378 is the Nucleophile; for glutamine hydrolysis of the active site. Residues 379-382 (LGMQ), E402, and R469 contribute to the L-glutamine site. Residues H514 and E516 contribute to the active site.

It belongs to the CTP synthase family. As to quaternary structure, homotetramer.

It catalyses the reaction UTP + L-glutamine + ATP + H2O = CTP + L-glutamate + ADP + phosphate + 2 H(+). The catalysed reaction is L-glutamine + H2O = L-glutamate + NH4(+). It carries out the reaction UTP + NH4(+) + ATP = CTP + ADP + phosphate + 2 H(+). The protein operates within pyrimidine metabolism; CTP biosynthesis via de novo pathway; CTP from UDP: step 2/2. With respect to regulation, allosterically activated by GTP, when glutamine is the substrate; GTP has no effect on the reaction when ammonia is the substrate. The allosteric effector GTP functions by stabilizing the protein conformation that binds the tetrahedral intermediate(s) formed during glutamine hydrolysis. Inhibited by the product CTP, via allosteric rather than competitive inhibition. Functionally, catalyzes the ATP-dependent amination of UTP to CTP with either L-glutamine or ammonia as the source of nitrogen. Regulates intracellular CTP levels through interactions with the four ribonucleotide triphosphates. The protein is CTP synthase of Alteromonas mediterranea (strain DSM 17117 / CIP 110805 / LMG 28347 / Deep ecotype).